The following is a 117-amino-acid chain: MKFQYKEVHPFEYRKKEGEKIRKKYPDRVPLIVEKAPKARVPDLDRRKYLVPSDLTDGQFYLLIRKRIHLRPEDALFFFVNNTIPPTSATMGQLYEDSHEEDDFLYVAYSNESVYGK.

Positions 1–22 are interaction with beta-tubulin; that stretch reads MKFQYKEVHPFEYRKKEGEKIR. The tract at residues 36–68 is interaction with GABRG2; it reads APKARVPDLDRRKYLVPSDLTDGQFYLLIRKRI. Gly116 carries the Phosphatidylethanolamine amidated glycine lipid modification. Position 117 (Lys117) is a propeptide, removed in mature form.

It belongs to the ATG8 family. As to quaternary structure, interacts with GABRG2 and beta-tubulin. Post-translationally, the precursor molecule is cleaved by ATG4B to form the cytosolic form, GABARAPL3-I. This is activated by APG7L/ATG7, transferred to ATG3 and conjugated to phospholipid to form the membrane-bound form, GABARAPL3-II. ATG4B also mediates the delipidation required for GABARAPL1 recycling when autophagosomes fuse with lysosomes. As to expression, ubiquitous. Expressed at very high levels in the brain, heart, peripheral blood leukocytes, liver, kidney, placenta and skeletal muscle. Expressed at very low levels in thymus and small intestine.

It is found in the cytoplasm. Its subcellular location is the cytoskeleton. The protein resides in the cytoplasmic vesicle. The protein localises to the autophagosome membrane. Ubiquitin-like modifier involved in autophagosome formation. Whereas LC3s are involved in elongation of the phagophore membrane, the GABARAP/GATE-16 subfamily is essential for a later stage in autophagosome maturation. In Homo sapiens (Human), this protein is Gamma-aminobutyric acid receptor-associated protein-like 3 (GABARAPL3).